A 1385-amino-acid polypeptide reads, in one-letter code: MLNRENKTAITRKGMVSNRLNKFSIRKYTVGTASILVGTTLIFGLGNQEAKAAESTNKELNEATTSASDNQSSDKVDMQQLNQEDNTKNDNQKEMVSSQGNETTSNGNKSIEKESVQSTTGNKVEVSTAKSDEQASPKSTNEDLNTKQTISNQEGLQPDLLENKSVVNVQPTNEENKKVDAKTESTTLNVKSDAIKSNAETLVDNNSNSNNENNADIILPKSTAPKSLNTRMRMAAIQPNSTDSKNVNDLITSNTTLTVVDADNSKTIVPAQDYLSLKSQITVDDKVKSGDYFTIKYSDTVQVYGLNPEDIKNIGDIKDPNNGETIATAKHDTANNLITYTFTDYVDRFNSVKMGINYSIYMDADTIPVDKKDVPFSVTIGNQITTTTADITYPAYKEADNNSIGSAFTETVSHVGNVEDPGYYNQVVYVNPMDKDLKGAKLKVEAYHPKYPTNIGQINQNVTNIKIYRVPEGYTLNKGYDVNTNDLVDVTDEFKNKMTYGSNQSVNLDFGDITSAYVVMVNTKFQYTNSESPTLVQMATLSSTGNKSVSTGNALGFTNNQSGGAGQEVYKIGNYVWEDTNKNGVQELGEKGVGNVTVTVFDNNTNTKVGEAVTKEDGSYLIPNLPNGDYRVEFSNLPKGYEVTPSKQGNNEELDSNGLSSVITVNGKDNLSADLGIYKPKYNLGDYVWEDTNKNGIQDQDEKGISGVTVTLKDENGNVLKTVTTDADGKYKFTDLDNGNYKVEFTTPEGYTPTTVTSGSDIEKDSNGLTTTGVINGADNMTLDSGFYKTPKYNLGNYVWEDTNKDGKQDSTEKGISGVTVTLKNENGEVLQTTKTDKDGKYQFTGLENGTYKVEFETPSGYTPTQVGSGTDEGIDSNGTSTTGVIKDKDNDTIDSGFYKPTYNLGDYVWEDTNKNGVQDKDEKGISGVTVTLKDENDKVLKTVTTDENGKYQFTDLNNGTYKVEFETPSGYTPTSVTSGNDTEKDSNGLTTTGVIKDADNMTLDSGFYKTPKYSLGDYVWYDSNKDGKQDSTEKGIKDVKVILLNEKGEVIGTTKTDENGKYRFDNLDSGKYKVIFEKPTGLTQTGTNTTEDDKDADGGEVDVTITDHDDFTLDNGYYEEETSDSDSDSDSDSDSDSDSDSDSDSDSDSDSDSDSDSDSDSDSDSDSDSDSDSDSDSDSDSDSDSDSDSDSDSDSDSDSDSDSDSDSDSDSDSDSDSDSDSDSDSDSDSDSDSDSDSDSDSDSDSDSDSDSDSDSDSDSDSDSDSDSDSDSDSDSDSDSDSDSDSDSDSDSDSDSDSDSDSDSDSDSDSDSDSDSDSDSDSDSDAGKHTPVKPMSTTKDHHNKAKALPETGNENSGSNNATLFGGLFAALGSLLLFGRRKKQNK.

The N-terminal stretch at 1 to 35 (MLNRENKTAITRKGMVSNRLNKFSIRKYTVGTASI) is a signal peptide. The YSIRK-G/S signaling motif signature appears at 23-34 (FSIRKYTVGTAS). The ligand binding A region stretch occupies residues 36 to 568 (LVGTTLIFGL…NNQSGGAGQE (533 aa)). 2 disordered regions span residues 54-162 (ESTN…DLLE) and 200-224 (ETLV…KSTA). Polar residues-rich tracts occupy residues 62–71 (EATTSASDNQ) and 94–109 (EMVS…NGNK). Basic and acidic residues predominate over residues 130 to 145 (KSDEQASPKSTNEDLN). The segment covering 146–155 (TKQTISNQEG) has biased composition (polar residues). Positions 205–214 (NNSNSNNENN) are enriched in low complexity. 5 consecutive CNA-B domains span residues 569 to 680 (VYKI…IYKP), 681 to 791 (KYNL…YKTP), 792 to 901 (KYNL…FYKP), 902 to 1012 (TYNL…YKTP), and 1013 to 1123 (KYSL…EEET). Disordered stretches follow at residues 856 to 886 (FETP…TGVI), 972 to 992 (YTPT…GLTT), and 1077 to 1361 (FEKP…SNNA). Composition is skewed to polar residues over residues 860 to 869 (SGYTPTQVGS) and 972 to 981 (YTPTSVTSGN). A compositionally biased stretch (low complexity) spans 1081 to 1090 (TGLTQTGTNT). 2 stretches are compositionally biased toward acidic residues: residues 1091–1101 (TEDDKDADGGE) and 1118–1324 (YYEE…DSDS). The LPXTG sorting signal signature appears at 1348-1352 (LPETG). Position 1351 is a pentaglycyl murein peptidoglycan amidated threonine (Thr1351). Positions 1352–1385 (GNENSGSNNATLFGGLFAALGSLLLFGRRKKQNK) are cleaved as a propeptide — removed by sortase.

The protein belongs to the serine-aspartate repeat-containing protein (SDr) family. Interacts with host DSG1; this interaction increases S.aureus adherence to keratinocytes.

The protein localises to the secreted. It localises to the cell wall. In terms of biological role, cell surface-associated calcium-binding protein which plays an important role in adhesion and pathogenesis. Mediates interactions with components of the extracellular matrix such as host DSG1 to promote bacterial adhesion to host cells. Contributes to the resistance to killing by innate immune components such as neutrophils present in blood and thus attenuates bacterial clearance. This Staphylococcus aureus (strain Mu50 / ATCC 700699) protein is Serine-aspartate repeat-containing protein D (sdrD).